A 486-amino-acid polypeptide reads, in one-letter code: Cytochrome P450 monooxygenase 1 (486 aa).

Residues 1-21 (MSHFLPTLILTSLTLVAYVLA) form the signal peptide. Asn-346 carries an N-linked (GlcNAc...) asparagine glycan. Cys-430 contributes to the heme binding site. Asn-434 carries an N-linked (GlcNAc...) asparagine glycan.

It belongs to the cytochrome P450 family. The cofactor is heme.

It participates in mycotoxin biosynthesis. Functionally, cytochrome P450 monooxygenase; part of the gene cluster that mediates the biosynthesis of aphidicolin, a specific inhibitor of eukaryotic DNA synthesis and DNA polymerase alpha. The geranylgeranyl pyrophosphate synthase GGS is required for supplying a sufficient amount of geranylgeranyl diphosphate (GGDP), the general precursor of diterpenes. The diterpene synthase ACS then catalyzes the conversion of geranylgeranyl diphosphate to aphidicolan-16-beta-ol via the intermediate syn-copalyldiphosphate (syn-CDP). In addition to aphidicolan-16-beta-ol, the enzyme also produces low levels of amphidicol-15-ene and amphidicol-16-ene. The cytochrome P450 monooxygenase P450-2 then catalyzes the two-step hydroxylation from aphidicolan-16-beta-ol to 3-deoxyaphidicolin via a 17,3-deoxyaphidicolin intermediate. Finally, the cytochrome P450 monooxygenase P450-1 converts 3-deoxyaphidicolin to aphidicolin. The protein is Cytochrome P450 monooxygenase 1 (PbP450-1) of Neocamarosporium betae (Beet black rot fungus).